The primary structure comprises 155 residues: Ribosome maturation factor RimP (155 aa).

The protein belongs to the RimP family.

It localises to the cytoplasm. Required for maturation of 30S ribosomal subunits. The chain is Ribosome maturation factor RimP from Gemmatimonas aurantiaca (strain DSM 14586 / JCM 11422 / NBRC 100505 / T-27).